The sequence spans 447 residues: UPF0210 protein LBUL_0934 (447 aa).

This sequence belongs to the UPF0210 family. Homodimer.

The chain is UPF0210 protein LBUL_0934 from Lactobacillus delbrueckii subsp. bulgaricus (strain ATCC BAA-365 / Lb-18).